Consider the following 513-residue polypeptide: ATP synthase subunit alpha (513 aa).

Residue 169-176 (GDRQTGKT) coordinates ATP.

This sequence belongs to the ATPase alpha/beta chains family. F-type ATPases have 2 components, CF(1) - the catalytic core - and CF(0) - the membrane proton channel. CF(1) has five subunits: alpha(3), beta(3), gamma(1), delta(1), epsilon(1). CF(0) has three main subunits: a(1), b(2) and c(9-12). The alpha and beta chains form an alternating ring which encloses part of the gamma chain. CF(1) is attached to CF(0) by a central stalk formed by the gamma and epsilon chains, while a peripheral stalk is formed by the delta and b chains.

Its subcellular location is the cell inner membrane. The catalysed reaction is ATP + H2O + 4 H(+)(in) = ADP + phosphate + 5 H(+)(out). In terms of biological role, produces ATP from ADP in the presence of a proton gradient across the membrane. The alpha chain is a regulatory subunit. This chain is ATP synthase subunit alpha, found in Hydrogenovibrio crunogenus (strain DSM 25203 / XCL-2) (Thiomicrospira crunogena).